The sequence spans 121 residues: UPF0344 protein BCG9842_B4136 (121 aa).

4 consecutive transmembrane segments (helical) span residues 6–26 (ITAW…YSAG), 38–58 (LMYI…VKTA), 65–85 (WYGL…MVLV), and 92–112 (PTGA…YLGL).

Belongs to the UPF0344 family.

The protein localises to the cell membrane. This Bacillus cereus (strain G9842) protein is UPF0344 protein BCG9842_B4136.